Consider the following 247-residue polypeptide: Peroxisomal membrane protein 11A (247 aa).

The Cytoplasmic portion of the chain corresponds to 1-83; it reads MDAFTRFTNQ…SIHATDLVPR (83 aa). Residues 84–105 form a helical membrane-spanning segment; that stretch reads LCLTLANLNRVIYFICDTILWV. The Lumenal portion of the chain corresponds to 106-219; the sequence is RSVGLTSGIN…DQLGIYKSNP (114 aa). The helical transmembrane segment at 220-239 threads the bilayer; the sequence is GIIGLGGLVSSIAGMITVAY. The segment at 220–239 is required for homodimerization, interaction with PEX11G, and peroxisomal localization; it reads GIIGLGGLVSSIAGMITVAY. At 240-247 the chain is on the cytoplasmic side; it reads PQMKLKTR.

The protein belongs to the peroxin-11 family. As to quaternary structure, homodimer. Heterodimer with PEX11G. Probably interacts with COPB2 and COPA. Interacts with PEX19. Interacts with FIS1. Post-translationally, seems not to be N-glycosylated.

It localises to the peroxisome membrane. In terms of biological role, may be involved in peroxisomal proliferation and may regulate peroxisomes division. May mediate binding of coatomer proteins to the peroxisomal membrane. Promotes membrane protrusion and elongation on the peroxisomal surface. The sequence is that of Peroxisomal membrane protein 11A (PEX11A) from Homo sapiens (Human).